The chain runs to 4717 residues: MDVLIEWVAIYPQIYDILEHINYVPSNTLQRLRLHQPWSKIDYDVWFLYASDEIRETCKVKYYGETKTYGEVFVLENERISQLHRLFVSWTVSERAEHLKNLLFDAGLSNLPLVELGGNVFFNSHVPLPCSLVLTKSTQENLNRITPYLVQKRPILLAGPEGIGKKFLITQIAAKLGQQIIRIHLSDSTDPKMLIGTYTSPKPGEFEWQPGVLTQAVITGKWILFTNIEHAPSEVLSVLLPLLEKRQLVIPSRGETIYAKGSFQMFATSSMKTKILGQRLWQILDLTYQPDECVEVVSTLYPVLSIICPTLYSVYKDIFDLFSQRSFLATSKIYRRLCLRDFYKFIKRVAFLYHKFMIPSDHVVISQELQDAVFKEAIDMFGAFIPSRDGFDLVVRNVAIELNIPPEKALQLRYSIPVFQNLEHNINIGRCSLKKLSTIRSCSTNSYAFTSSSLGLLEQLAAGVQTNEPLLLVGETGTGKTTTIQLLAGLLGQKVTVINMSQQTESSDMLGGYKPINASTLGLPLHERFIDIFEQTFSSKKNAKFISMASTSARRFRWKTCLKIWKEACKLSKTVLDGQQPLPNPQKRQKRLSNQVELRNQWAKFEKEVEDFEKVLTGGSNGFMFSFVEGALVKAVRSGHWVLLDEINLASLETLEPIGQLLSSYESGILLSERGDITPITPHKNFRLFGCMNPSTDVGKRELEPSFRSRFTEIYVHSPDQNLDDLLSIIQKYIGSLCIGNEHVIREVAELYQVAKSLSLDGSLVDGAGQRPHYTVRTLSRTLSYVTEIAPIYGLRRSLYEGFCMSFLTLLDHTSESLLYNHVVRFTLGELNRDQQNAILKQIPKVPDHSSYIAFCHYWLRRGSFPVEEQEHYIITPFVQKNLLNIARACSTRMFPILIQGPTSSGKTSMIEYVAKKTGHKFVRINNHEHTDLQEYIGTYVTDDNGSLSFREGVLVEALRNGYWIVLDELNLAPTDVLEALNRLLDDNRELFIPETQVLVKPHPEFMLFATQNPPGVYAGRKHLSRAFRNRFLEIHFDDIPENELETILHKRCKIAPSYAAKIVQVFRELSLRRQTTRIFEQKNSFATLRDLFRWAFREAVGYQQLAENGYMLLAERARDQKDKLAVQEVIEKVMKVKIDTDGIYNLDSMEIFQDMSLKEGPLSKVVWTRPMIRLFCLVWRCLLAKEPVLLVGDTGCGKTTVCQILAECLHKELHIINAHQDTENGDIIGAQRPVRNRSAVNYSLHSQLCEKFNVQESLDSIDDLIEKFEKLSSSEKNDNLSNLIERQIIKYRSLFEWHDGALVTAMKQGDFFLLDEISLADDSVLERLNSVLELSRTLTLVEHSNAAVSLTAKDGFAFFATMNPGGDYGKKELSPALRNRFTEIWVPPMVDTEDILKIVEGKLHNNKIELARPLVEYAKWHANEYLYTDVISIRDVLSAVEFINACEILDLNLVLFNAVSMVFIDALGSFTTFSLSNNLASLHAERQRCFAKLNELAGSNIMASKSADISIKFSDSSFFIGDFGIPLGDSVESDSTYSLHTDTTLMNASKVLRALQVLKPILLEGSPGVGKTSLITALARETGHQLVRINLSDQTDLMDLFGSDVPVEGGEGGQFAWRDAPFLAAMRNGHWVLLDELNLASQSVLEGLNACLDHRNEAYIPELDKVFKAHPNFRVFAAQNPQHQGGGRKGLPRSFINRFSVVYVEALKEKDMIEIAACNYHQVNEDWRLKIIKFMFRLQDNIEKDISFGSFGSPWEFNLRDTLRWLQLLNDAPKYTCVSPADYLEVMVLHRMRTVEDRVRTCELFKEVFDIDYEPRTIGFSLSSQCFKVGHSLLVRDVERQKTLLDSQNILQSQLPVLESVITCINKKWPCILVGDTATGKTCILRLLAAIAGAKIKEMAVNSDTDTMDLIGEYEQIDISRKASELFTDLSQQLLNIVIKYRNFDNIFRETSLYTLTTTSFKTHSQAFTLLQKVVDQLDQLKIHETLVHSLGDIHEKARKLLAEFSASPAGRFEWFDGYLLKAVEEGHWFVLDNANLCSPAVLDRLNSLLEHKGVLIVNEKTTEDGHPKTIKPHPNFRLFLTVNPVYGELSRAMRNRGVEIFLLKEALTEIDKKQMSLLEPAPISSAVDTLASNISYIKYVFETMGKIEIDGNYMYIAHAIILALFSPRQLKLLRKVLLTNPQFSLSIKADAELLLTLKNLVQKIYCADYFNHMDLKASRFMDIYEYPVQLREVVGLIQTINDFQSVILTSHLELPETYASGLLFVSAHEILDLTEEVNRLAVSTSNSTYLLKSASAVYHNVSSFKGSTPSLWNLLNQFSKFLIEIASANSNIVYKLSYDVIRHFLKLVVLWKNIYVWTNVPDCDISRFYCYTKMLGEWMFTLTEKTKLLESFLPKDSLEKFSELQNLSTGLHMQAIWDKWHAFVPRTYDQWSLWNTVDKLLTQYVNANIPSISMETTACEVVGTSLSLLNKVLVENEVGDIYSYLKILGKGVNELKSSKQVILPENLVNLFNCLASLDLLHIFIKYTTSSFFLTDDFVRFIRVCFHSRISGNLLTLLHGISFDSTKAVAPVLTYFDFCSLTTGNILGRIALAFTSIDENANLESANIFEHARLALLQHFMDHSSLLAEDSSTKMNLILLQRYAVIISIFLDQGKCEKANDLITKLSLPYEELAENFVSILEACKAFLVANSEFISYTYTERFIHSLRFLKDSWLSSNQQKMLKNQGMAYIYFASGMLLVYVPDKPFDPALLPLLTVESLRHYLESLYKESQILEIAESLNSGKVNSVMRRLVSTEISNTPNIDSSFSTVYRSLNESIVPLYSELEFFMKSVVLNQYIFELAMRLSKESNIAVVEEAKSFVTKWKAYIERIREAYPQFVDVYELILSFISFMIYGIELLMFEAKRRLDERSQILSTLILTLVDPSSFARSLSFDDVSNLIEQIKVLDLNDSIRFEIYLFLASRLCSEKQHSSDTHSLANSFVLLANEFYIHNAKIKQKELEEIEEKNRLYRQREFNFDKNDYLKVFINYDDEVEPEVEPEVVIERKRFLQLQFAFWSLYNEIYSEKMNVIPLEQLMNTGSYLAKKIKVKNPDMIASSGFDIVSVVLMMGVKSTNERQYWTPPVYNFYSDPNPSKAIEVRDLIKIVESRAISLIKNWPENFVLRGLKDAIDAILNLSPFSPIAEYLSKLERVFHLLSEWEKLASREYSLANEMDLIKKKIIDWRKFELSNWNNLLKLEEYKLSERVYPRLYSILQFIILKPFFENSKFTKQNLCESASIIVQFITDLTVGEFQLCLKCLLSFSQHAASLRICHGIDAMLLNIYHYFEQFLSKVSEAIHTQKQSLENSIKERILLMSWKDTNVYALKESAKKSHAELFKVLHRYREVLRQPVSSYLSQKHDWDSLLDTENNSAMWVAKKVNLSPSYIEKMDTEIMKLVPVRFSNTPTTLRLMWTLFANVEKPGSTFTNMVSNLITDARELMKLTPETINDDNLSEIKHLKSRKHLLLTETFKTLKAFGLQYRVKAGIEENLSNLRNLLAVIPTFPVTSLSIEKVDRSLMKSLDFIPKFQTLAGHQHNDLSVPEVQKGVGLFNSMLSLQLGERAQLVEFTNELLALKNVYSEVGVNGSPLESFNNSSFNEVSSLGYDHDFENRAQAVSMLCQIYAIVIQKHSSISPTASFQSIGHELSRFADLLSNKLFPSSIPLYASADKVSSIRDQQKGINDLIEYCRKKRTELPELSYCFKHLVSLQSLKSISRTQVDLTNDEFLNLMNFVLNLFDSLLSSIETATKNMRTFKELAETSSFIEMSSCFSKVLRAFNLKFQSMKLSSLKEKLRSSSVDKMSCQLLMLFLPVCEQFINLAESVLDYFINVHNSNLDSLSKISTLFFMVANNGFCSPDLPQEGKSNSGELESGTGLGSGVGAEDITNTLNEDDDLEELANEEDTANQSDLDESEARELESDMNGVTKDSVVSENENSDSEEENQDLDEEVNDIPEDLSNSLNEKLWDEPNEEDLLETEQKSNEQSAANNESDLVSKEDDNKALEDKDRQEKEDEEEMSDDVGIDDEIQPDIQENNSQPPPENEDHLDLPEDLKLDEKEGDVSKDSDLEDMDMEAADENKEEADAEKDEPMQDFEDPLEENNTLDEDIQQDDFSDLAEDDEKMNEDGFEENVQENEESTEDGVKSDEELEQGEVPEDQAIDNHPKMDAKSTFASAEADEENTDKGIVGENEELGEEDGAAESGVRGNGTADGEFSSAEQVQKGEDTSTPKEAMSEADRQYQSLGDHLREWQQANRIHEWEDLTESQSQAFDDSEFMHVKEDEEEDLQALGNAEKDQIKSIDRDESANQNPDSMNSTNIAEDEADEVGDKQLQDGQDISDIKQTGEDTLPTEFGSINQSEKVFELSEDEDIEDELPDYNVKITNLPAAMPIDEARDLWNKHEDSTKQLSIELCEQLRLILEPTLATKMQGDFRTGKRLNMKRIIPYIASQFKKDKIWMRRVKPSKRTYQVMISIDDSKSMSESGSTVLALETLALVTKALSLLEVGQIAVMKFGEQPELLHPFDKQFSSESGVQMFSHFTFEQSNTNVLALADASMKCFNYANTASHHRSNSDIRQLEIIISDGICEDHDSIRKLLRRAQEEKVMIVFVILDNVNTQKKSSILDIKKVYYDTKEDGTMDLKIQPYIDEFAFDYYLVVRNIEELPQLLSSALRQWFQQMSNT.

6 AAA-ATPase protomer regions span residues 149-384 (LVQK…FGAF), 458-797 (EQLA…GLRR), 871-1131 (EHYI…QEVI), 1157-1448 (SLKE…NACE), 1552-1811 (VLRA…EVFD), and 1858-2106 (VLES…FLLK). ATP-binding positions include 159–166 (GPEGIGKK) and 474–481 (GETGTGKT). At Ser-593 the chain carries Phosphoserine. ATP is bound by residues 901–908 (GPTSSGKT), 1193–1200 (GDTGCGKT), 1566–1573 (GSPGVGKT), and 1876–1883 (GDTATGKT). Residues 2173-3925 (KLLRKVLLTN…SGVGAEDITN (1753 aa)) are linker. 3 disordered regions span residues 3898 to 3924 (PQEG…EDIT), 3936 to 4283 (LANE…LGDH), and 4295 to 4365 (EWED…EVGD). Composition is skewed to acidic residues over residues 3936 to 3950 (LANE…DLDE) and 3973 to 3993 (ENSD…DIPE). Residues 4020–4030 (NEQSAANNESD) are compositionally biased toward polar residues. Residues 4031–4049 (LVSKEDDNKALEDKDRQEK) are compositionally biased toward basic and acidic residues. A compositionally biased stretch (acidic residues) spans 4050 to 4066 (EDEEEMSDDVGIDDEIQ). A compositionally biased stretch (basic and acidic residues) spans 4080–4103 (NEDHLDLPEDLKLDEKEGDVSKDS). Composition is skewed to acidic residues over residues 4104 to 4177 (DLED…ESTE), 4184 to 4196 (EELE…EDQA), and 4226 to 4236 (ENEELGEEDGA). Basic and acidic residues-rich tracts occupy residues 4258–4275 (QKGE…EADR) and 4329–4342 (AEKD…RDES). Residues 4343–4355 (ANQNPDSMNSTNI) show a composition bias toward polar residues. The VWFA domain occupies 4505 to 4707 (QVMISIDDSK…ELPQLLSSAL (203 aa)).

Belongs to the midasin family. As to quaternary structure, associates with pre-60S ribosomes in the nucleoplasm.

The protein localises to the nucleus. The protein resides in the nucleolus. It is found in the nucleoplasm. Its function is as follows. Nuclear chaperone required for maturation and nuclear export of pre-60S ribosome subunits. Functions at successive maturation steps to remove ribosomal factors at critical transition points, first driving the exit of early pre-60S particles from the nucleolus and then driving late pre-60S particles from the nucleus. This is Midasin (mdn1) from Schizosaccharomyces pombe (strain 972 / ATCC 24843) (Fission yeast).